The chain runs to 1182 residues: Protein patched homolog 2 (1182 aa).

Residues 1–57 (MVRPLSLGELPPSYTPPARSSAPHILAGSLQAPLWLRAYFQGLLFSLGCRIQKHCGK) are Cytoplasmic-facing. A helical transmembrane segment spans residues 58–78 (VLFLGLVAFGALALGLRVAVI). At 79–394 (ETDLEQLWVE…DILRAFSEVS (316 aa)) the chain is on the extracellular side. The N-linked (GlcNAc...) asparagine glycan is linked to Asn-370. Residues 394-552 (STTRVVGGYL…MLVFPAILSL (159 aa)) enclose the SSD domain. Residues 395-414 (TTRVVGGYLLMLAYACVTML) form a helical membrane-spanning segment. Residues 415-428 (RWDCAQSQGAVGLA) are Cytoplasmic-facing. Residues 429–449 (GVLLVALAVASGLGLCALLGI) form a helical membrane-spanning segment. Topologically, residues 450–457 (TFNAATTQ) are extracellular. A helical membrane pass occupies residues 458–478 (VLPFLALGIGVDDIFLLAHAF). Residues 479 to 501 (TKAPPDTPLPERMGECLRSTGTS) are Cytoplasmic-facing. The helical transmembrane segment at 502 to 522 (VALTSVNNMVAFFMAALVPIP) threads the bilayer. Topologically, residues 523 to 531 (ALRAFSLQA) are extracellular. A helical transmembrane segment spans residues 532-552 (AIVVGCNFAAVMLVFPAILSL). At 553-686 (DLRRRHRQRL…APLLLQTRAK (134 aa)) the chain is on the cytoplasmic side. Residues 687–707 (ALVLLFFGALLGLSLYGATLV) form a helical membrane-spanning segment. The Extracellular portion of the chain corresponds to 708-963 (QDGLALTDVV…WEQYLGLRRC (256 aa)). Asn-812 carries an N-linked (GlcNAc...) asparagine glycan. Residues 964–984 (FLLAVCILLVCTFLVCALLLL) form a helical membrane-spanning segment. Residues 985-991 (SPWTAGL) lie on the Cytoplasmic side of the membrane. A helical transmembrane segment spans residues 992–1012 (IVLVLAMMTVELFGIMGFLGI). A topological domain (extracellular) is located at residue Lys-1013. Residues 1014 to 1034 (LSAIPVVILVASIGIGVEFTV) traverse the membrane as a helical segment. Residues 1035 to 1064 (HVALGFLTSHGSRNLRAASALEQTFAPVTD) lie on the Cytoplasmic side of the membrane. A helical transmembrane segment spans residues 1065 to 1085 (GAVSTLLGLLMLAGSNFDFII). Position 1086 (Arg-1086) is a topological domain, extracellular. The chain crosses the membrane as a helical span at residues 1087–1107 (YFFVVLTVLTLLGLLHGLLLL). Residues 1108–1182 (PVLLSILGPP…YVHPASEEPT (75 aa)) lie on the Cytoplasmic side of the membrane.

The protein belongs to the patched family. In terms of tissue distribution, expressed in epithelial cells of the developing hair, tooth and whisker.

It localises to the membrane. In terms of biological role, plays a role in the control of cellular growth. May have a role in epidermal development. May act as a receptor for Sonic hedgehog (SHH). This chain is Protein patched homolog 2 (Ptch2), found in Mus musculus (Mouse).